The sequence spans 363 residues: MIAELEIIFYSQKGEGVGFYLNKPTYVKGVIKGEKIKAFIYLESASFFKARLVEILIESKNRNHDVPKLHYLIGGYELLHMNNTEQINFKKERVINDFKKIANYEISSLELVQGKKLLHYRNKITLHYGSLYLANSNHKIKLAKSLLTDINLKANKKEAEWIIRKLDTQIEGTKQTKIYTTDKMNGITFRVGLNSFYQVNKEVANLIYNQISEFINLNENVLDLYSGIGTISLLIAAKAKSVTGVERNLDSIEDANFNKEFNKIKNVNFIHQDVIKYLKQNKTYFDTVIVDPARRGLEEDIIELILKLKPQKIIYLSCNVGTQASNFNKFKHEYQIEFIKSYDMFPQTYHIESLMVLKKLNKQ.

The S-adenosyl-L-methionine site is built by Q198, Y225, E246, and D291. The active-site Nucleophile is the C318.

It belongs to the class I-like SAM-binding methyltransferase superfamily. RNA M5U methyltransferase family.

This is an uncharacterized protein from Mycoplasma mobile (strain ATCC 43663 / 163K / NCTC 11711) (Mesomycoplasma mobile).